The following is a 279-amino-acid chain: Ribosomal RNA large subunit methyltransferase E (279 aa).

A compositionally biased stretch (basic and acidic residues) spans Met1–Asp10. Residues Met1–Ala66 are disordered. Residues Gly136, Trp138, Asp154, Asp170, and Asp194 each contribute to the S-adenosyl-L-methionine site. Catalysis depends on Lys234, which acts as the Proton acceptor.

This sequence belongs to the class I-like SAM-binding methyltransferase superfamily. RNA methyltransferase RlmE family.

The protein resides in the cytoplasm. The catalysed reaction is uridine(2552) in 23S rRNA + S-adenosyl-L-methionine = 2'-O-methyluridine(2552) in 23S rRNA + S-adenosyl-L-homocysteine + H(+). Specifically methylates the uridine in position 2552 of 23S rRNA at the 2'-O position of the ribose in the fully assembled 50S ribosomal subunit. This chain is Ribosomal RNA large subunit methyltransferase E, found in Maricaulis maris (strain MCS10) (Caulobacter maris).